Reading from the N-terminus, the 1741-residue chain is DNA-directed RNA polymerase III subunit RPC1 (1741 aa).

Zn(2+) contacts are provided by C79, C82, C89, H92, C119, C122, and C160. 3 residues coordinate Mg(2+): D722, D724, and D726. The tract at residues P1099–D1111 is bridging helix. The disordered stretch occupies residues R1719–R1741.

It belongs to the RNA polymerase beta' chain family. As to quaternary structure, component of the RNA polymerase III (Pol III) complex consisting of 17 subunits.

It is found in the nucleus. The enzyme catalyses RNA(n) + a ribonucleoside 5'-triphosphate = RNA(n+1) + diphosphate. Its function is as follows. DNA-dependent RNA polymerase catalyzes the transcription of DNA into RNA using the four ribonucleoside triphosphates as substrates. Largest and catalytic core component of RNA polymerase III which synthesizes small RNAs, such as 5S rRNA and tRNAs. Forms the polymerase active center together with the second largest subunit. A single-stranded DNA template strand of the promoter is positioned within the central active site cleft of Pol III. A bridging helix emanates from RPC1 and crosses the cleft near the catalytic site and is thought to promote translocation of Pol III by acting as a ratchet that moves the RNA-DNA hybrid through the active site by switching from straight to bent conformations at each step of nucleotide addition. The polypeptide is DNA-directed RNA polymerase III subunit RPC1 (RPOA3) (Giardia intestinalis (Giardia lamblia)).